The following is a 545-amino-acid chain: Chaperonin GroEL (545 aa).

ATP contacts are provided by residues 30 to 33, Lys-51, 87 to 91, Gly-416, 479 to 481, and Asp-495; these read TMGP, DGTTT, and NAA.

Belongs to the chaperonin (HSP60) family. As to quaternary structure, forms a cylinder of 14 subunits composed of two heptameric rings stacked back-to-back. Interacts with the co-chaperonin GroES.

The protein resides in the cytoplasm. It carries out the reaction ATP + H2O + a folded polypeptide = ADP + phosphate + an unfolded polypeptide.. Together with its co-chaperonin GroES, plays an essential role in assisting protein folding. The GroEL-GroES system forms a nano-cage that allows encapsulation of the non-native substrate proteins and provides a physical environment optimized to promote and accelerate protein folding. This is Chaperonin GroEL from Nautilia profundicola (strain ATCC BAA-1463 / DSM 18972 / AmH).